Reading from the N-terminus, the 374-residue chain is Alcohol dehydrogenase 1 (374 aa).

Ser-1 bears the N-acetylserine mark. Positions 46, 67, 97, 100, 103, 111, and 174 each coordinate Zn(2+). Residues 199–204, Asp-223, Lys-228, 292–294, and Arg-369 each bind NAD(+); these read GLGGVG and VGV.

It belongs to the zinc-containing alcohol dehydrogenase family. Class-I subfamily. It depends on Zn(2+) as a cofactor.

It localises to the cytoplasm. The catalysed reaction is a primary alcohol + NAD(+) = an aldehyde + NADH + H(+). It carries out the reaction a secondary alcohol + NAD(+) = a ketone + NADH + H(+). This chain is Alcohol dehydrogenase 1, found in Alligator mississippiensis (American alligator).